A 50-amino-acid polypeptide reads, in one-letter code: Protein PndA (50 aa).

A helical transmembrane segment spans residues 5-25 (TFLMMLIVICVTILCFVWMVR).

This sequence belongs to the Hok/Gef family.

The protein resides in the cell inner membrane. In terms of biological role, toxic component of a type I toxin-antitoxin (TA) system. When expressed is involved in cellular Mg(2+) release and degradation of stable RNA. The polypeptide is Protein PndA (pndA) (Escherichia coli).